Consider the following 169-residue polypeptide: Shikimate kinase (169 aa).

13 to 18 (GAGKST) provides a ligand contact to ATP. Mg(2+) is bound at residue Ser17. Asp35, Arg59, and Gly80 together coordinate substrate. Arg117 is an ATP binding site. Arg136 is a binding site for substrate. Arg153 provides a ligand contact to ATP.

Belongs to the shikimate kinase family. In terms of assembly, monomer. Mg(2+) is required as a cofactor.

Its subcellular location is the cytoplasm. The enzyme catalyses shikimate + ATP = 3-phosphoshikimate + ADP + H(+). It participates in metabolic intermediate biosynthesis; chorismate biosynthesis; chorismate from D-erythrose 4-phosphate and phosphoenolpyruvate: step 5/7. Functionally, catalyzes the specific phosphorylation of the 3-hydroxyl group of shikimic acid using ATP as a cosubstrate. The polypeptide is Shikimate kinase (Corynebacterium efficiens (strain DSM 44549 / YS-314 / AJ 12310 / JCM 11189 / NBRC 100395)).